Reading from the N-terminus, the 198-residue chain is Holliday junction branch migration complex subunit RuvA (198 aa).

The domain I stretch occupies residues 1-63; it reads MYDYIKGQLT…EDAHLLFGFH (63 aa). The domain II stretch occupies residues 64–142; the sequence is TEDEKDVFLK…EAPQETGHTK (79 aa). Residues 143 to 147 are flexible linker; it reads ARSNK. A domain III region spans residues 148–198; it reads AGNTQLDEAIEALLALGYTATELKKIRAFFEGTSETAEQYIKSALKLLMKG.

This sequence belongs to the RuvA family. As to quaternary structure, homotetramer. Forms an RuvA(8)-RuvB(12)-Holliday junction (HJ) complex. HJ DNA is sandwiched between 2 RuvA tetramers; dsDNA enters through RuvA and exits via RuvB. An RuvB hexamer assembles on each DNA strand where it exits the tetramer. Each RuvB hexamer is contacted by two RuvA subunits (via domain III) on 2 adjacent RuvB subunits; this complex drives branch migration. In the full resolvosome a probable DNA-RuvA(4)-RuvB(12)-RuvC(2) complex forms which resolves the HJ.

Its subcellular location is the cytoplasm. Functionally, the RuvA-RuvB-RuvC complex processes Holliday junction (HJ) DNA during genetic recombination and DNA repair, while the RuvA-RuvB complex plays an important role in the rescue of blocked DNA replication forks via replication fork reversal (RFR). RuvA specifically binds to HJ cruciform DNA, conferring on it an open structure. The RuvB hexamer acts as an ATP-dependent pump, pulling dsDNA into and through the RuvAB complex. HJ branch migration allows RuvC to scan DNA until it finds its consensus sequence, where it cleaves and resolves the cruciform DNA. The polypeptide is Holliday junction branch migration complex subunit RuvA (Streptococcus pyogenes serotype M49 (strain NZ131)).